The chain runs to 216 residues: Protein Syd (216 aa).

The protein belongs to the Syd family.

The protein resides in the cell inner membrane. Interacts with the SecY protein in vivo. May bind preferentially to an uncomplexed state of SecY, thus functioning either as a chelating agent for excess SecY in the cell or as a regulatory factor that negatively controls the translocase function. This Shewanella sp. (strain ANA-3) protein is Protein Syd.